Consider the following 260-residue polypeptide: Opacity protein opA58 (260 aa).

The signal sequence occupies residues 1–23; it reads MNPAPKKPSLLFSSLLFSSAAQA.

It belongs to the opacity porin family.

Its subcellular location is the cell outer membrane. Functionally, implicated in a number of adherence functions. OPA proteins are implicated in pathogenesis and are subject to phase variation. This Neisseria gonorrhoeae protein is Opacity protein opA58 (opaJ).